The sequence spans 644 residues: Protein cueball (644 aa).

Residues methionine 1 to glycine 26 form the signal peptide. Over threonine 27–serine 531 the chain is Extracellular. 2 N-linked (GlcNAc...) asparagine glycosylation sites follow: asparagine 82 and asparagine 108. LDL-receptor class B repeat units follow at residues methionine 121–arginine 166, arginine 167–serine 211, and aspartate 212–alanine 257. Asparagine 175 and asparagine 190 each carry an N-linked (GlcNAc...) asparagine glycan. The segment at threonine 280–proline 301 is disordered. Acidic residues predominate over residues glutamate 286–proline 301. N-linked (GlcNAc...) asparagine glycosylation occurs at asparagine 313. 2 consecutive EGF-like domains span residues glutamate 398–glutamate 430 and glutamate 433–glutamate 471. Cystine bridges form between cysteine 402–cysteine 411, cysteine 406–cysteine 421, cysteine 437–cysteine 447, cysteine 441–cysteine 459, and cysteine 461–cysteine 470. 2 N-linked (GlcNAc...) asparagine glycosylation sites follow: asparagine 473 and asparagine 508. Residues serine 532–valine 552 traverse the membrane as a helical segment. Over histidine 553–tyrosine 644 the chain is Cytoplasmic.

Belongs to the cueball family.

The protein resides in the cell membrane. In terms of biological role, has a role in spermatogenesis and oogenesis. The polypeptide is Protein cueball (Drosophila sechellia (Fruit fly)).